The primary structure comprises 216 residues: Protein E4.2 (216 aa).

This Pantherophis guttatus (Corn snake) protein is Protein E4.2.